The following is a 309-amino-acid chain: Low density lipoprotein receptor adapter protein 1-B (309 aa).

In terms of domain architecture, PID spans 41–195 (LLEGMLFHLK…SDGEGASSSQ (155 aa)). The segment at 179-201 (DKREKSGSDGEGASSSQSDGSSS) is disordered. Residues 189 to 201 (EGASSSQSDGSSS) show a composition bias toward low complexity. The Clathrin box motif lies at 213-217 (LLDFE). Positions 250 to 277 (WELDDGLDEAFARLAESRTNPQVLDIGL) are AP-2 complex binding. The short motif at 258 to 267 (EAFARLAESR) is the [DE]-X(1,2)-F-X-X-[FL]-X-X-X-R motif element.

Interacts (via PID domain) with ldlr (via NPXY motif). Binds to soluble clathrin trimers and to the adapter protein complex 2 (AP-2, beta 2 subunit). Binds to phosphoinositides, which regulate clathrin bud assembly at the cell surface. Interacts with the VLDL receptor (vldlr). Interacts with the vitellogenin receptor. As to expression, expressed at high level during oogenesis and embryogenesis. Found at low level in the adult liver and spleen. Found at very low level in testis and heart. Not found in the oocyte vegetal cortex.

The protein resides in the cytoplasm. Adapter protein (clathrin-associated sorting protein (CLASP)) required for efficient endocytosis of the LDL receptor (LDLR). Also involved in the vitellogenin receptor mediated endocytosis of nutrients during oogenesis. The polypeptide is Low density lipoprotein receptor adapter protein 1-B (Xenopus laevis (African clawed frog)).